The sequence spans 482 residues: Aspartyl/glutamyl-tRNA(Asn/Gln) amidotransferase subunit B (482 aa).

The protein belongs to the GatB/GatE family. GatB subfamily. In terms of assembly, heterotrimer of A, B and C subunits.

It catalyses the reaction L-glutamyl-tRNA(Gln) + L-glutamine + ATP + H2O = L-glutaminyl-tRNA(Gln) + L-glutamate + ADP + phosphate + H(+). It carries out the reaction L-aspartyl-tRNA(Asn) + L-glutamine + ATP + H2O = L-asparaginyl-tRNA(Asn) + L-glutamate + ADP + phosphate + 2 H(+). In terms of biological role, allows the formation of correctly charged Asn-tRNA(Asn) or Gln-tRNA(Gln) through the transamidation of misacylated Asp-tRNA(Asn) or Glu-tRNA(Gln) in organisms which lack either or both of asparaginyl-tRNA or glutaminyl-tRNA synthetases. The reaction takes place in the presence of glutamine and ATP through an activated phospho-Asp-tRNA(Asn) or phospho-Glu-tRNA(Gln). This Thermotoga sp. (strain RQ2) protein is Aspartyl/glutamyl-tRNA(Asn/Gln) amidotransferase subunit B.